Here is a 943-residue protein sequence, read N- to C-terminus: Isoleucine--tRNA ligase (943 aa).

Positions 58–68 (PYANGTIHIGH) match the 'HIGH' region motif. Position 567 (glutamate 567) interacts with L-isoleucyl-5'-AMP. Positions 608-612 (KMSKS) match the 'KMSKS' region motif. Lysine 611 lines the ATP pocket. Residues cysteine 906, cysteine 909, cysteine 926, and cysteine 929 each coordinate Zn(2+).

It belongs to the class-I aminoacyl-tRNA synthetase family. IleS type 1 subfamily. Monomer. The cofactor is Zn(2+).

It is found in the cytoplasm. It catalyses the reaction tRNA(Ile) + L-isoleucine + ATP = L-isoleucyl-tRNA(Ile) + AMP + diphosphate. Catalyzes the attachment of isoleucine to tRNA(Ile). As IleRS can inadvertently accommodate and process structurally similar amino acids such as valine, to avoid such errors it has two additional distinct tRNA(Ile)-dependent editing activities. One activity is designated as 'pretransfer' editing and involves the hydrolysis of activated Val-AMP. The other activity is designated 'posttransfer' editing and involves deacylation of mischarged Val-tRNA(Ile). The chain is Isoleucine--tRNA ligase from Pseudomonas fluorescens (strain Pf0-1).